Consider the following 437-residue polypeptide: UDP-N-acetylmuramate--L-alanine ligase (437 aa).

Position 108-114 (108-114 (GAHGKTS)) interacts with ATP.

This sequence belongs to the MurCDEF family.

The protein resides in the cytoplasm. The enzyme catalyses UDP-N-acetyl-alpha-D-muramate + L-alanine + ATP = UDP-N-acetyl-alpha-D-muramoyl-L-alanine + ADP + phosphate + H(+). The protein operates within cell wall biogenesis; peptidoglycan biosynthesis. Its function is as follows. Cell wall formation. The chain is UDP-N-acetylmuramate--L-alanine ligase from Staphylococcus saprophyticus subsp. saprophyticus (strain ATCC 15305 / DSM 20229 / NCIMB 8711 / NCTC 7292 / S-41).